We begin with the raw amino-acid sequence, 141 residues long: Large ribosomal subunit protein uL11 (141 aa).

This sequence belongs to the universal ribosomal protein uL11 family. As to quaternary structure, part of the ribosomal stalk of the 50S ribosomal subunit. Interacts with L10 and the large rRNA to form the base of the stalk. L10 forms an elongated spine to which L12 dimers bind in a sequential fashion forming a multimeric L10(L12)X complex. In terms of processing, one or more lysine residues are methylated.

Its function is as follows. Forms part of the ribosomal stalk which helps the ribosome interact with GTP-bound translation factors. The sequence is that of Large ribosomal subunit protein uL11 from Leptospira biflexa serovar Patoc (strain Patoc 1 / Ames).